We begin with the raw amino-acid sequence, 254 residues long: MAAYKLVLIRHGESAWNLENRFSGWYDADLSPAGHEEAKRGGQALRDAGYEFDICFTSVQKRAIRTLWTVLDAIDQMWLPVVRTWRLNERHYGGLTGLNKAETAAKHGEAQVKIWRRSYDVPPPPMEPDHPFYSNISKDRRYADLTEDQLPSCESLKDTIARALPFWNEEIVPQIKEGKRVLIAAHGNSLRGIVKHLEGLSEEAIMELNLPTGIPIVYELDKNLKPIKPMQFLGDEETVRKAMEAVAAQGKAKK.

Substrate-binding positions include 10 to 17 (RHGESAWN) and 23 to 24 (SG). His11 acts as the Tele-phosphohistidine intermediate in catalysis. Residues Ser14 and Ser23 each carry the phosphoserine modification. The residue at position 26 (Tyr26) is a Phosphotyrosine. Ser31 carries the post-translational modification Phosphoserine. Residues Arg62, 89–92 (ERHY), and Lys100 each bind substrate. The active-site Proton donor/acceptor is the Glu89. The residue at position 106 (Lys106) is an N6-acetyllysine. Substrate is bound at residue 116-117 (RR). The residue at position 118 (Ser118) is a Phosphoserine. 187-188 (GN) is a binding site for substrate. At Lys251 the chain carries N6-acetyllysine; alternate. The residue at position 251 (Lys251) is an N6-succinyllysine; alternate. 2 positions are modified to N6-acetyllysine: Lys253 and Lys254.

It belongs to the phosphoglycerate mutase family. BPG-dependent PGAM subfamily. As to quaternary structure, homodimer. In terms of processing, acetylated at Lys-253, Lys-253 and Lys-254 under high glucose condition. Acetylation increases catalytic activity. Under glucose restriction SIRT1 levels dramatically increase and it deacetylates the enzyme. In terms of tissue distribution, expressed in the liver and brain. Not found in the muscle.

The catalysed reaction is (2R)-2-phosphoglycerate = (2R)-3-phosphoglycerate. It catalyses the reaction (2R)-3-phospho-glyceroyl phosphate = (2R)-2,3-bisphosphoglycerate + H(+). Catalyzes the interconversion of 2-phosphoglycerate and 3-phosphoglyceratea crucial step in glycolysis, by using 2,3-bisphosphoglycerate. Also catalyzes the interconversion of (2R)-2,3-bisphosphoglycerate and (2R)-3-phospho-glyceroyl phosphate. In Homo sapiens (Human), this protein is Phosphoglycerate mutase 1.